Consider the following 422-residue polypeptide: Dihydroorotase (422 aa).

Residues His-53 and His-55 each coordinate Zn(2+). Substrate is bound by residues 55 to 57 and Asn-87; that span reads HFR. Residues Glu-138, His-172, His-223, and Asp-291 each contribute to the Zn(2+) site. The active site involves Asp-291. His-295 lines the substrate pocket.

This sequence belongs to the metallo-dependent hydrolases superfamily. DHOase family. Class I DHOase subfamily. It depends on Zn(2+) as a cofactor.

The enzyme catalyses (S)-dihydroorotate + H2O = N-carbamoyl-L-aspartate + H(+). The protein operates within pyrimidine metabolism; UMP biosynthesis via de novo pathway; (S)-dihydroorotate from bicarbonate: step 3/3. Catalyzes the reversible cyclization of carbamoyl aspartate to dihydroorotate. In Halobacterium salinarum (strain ATCC 700922 / JCM 11081 / NRC-1) (Halobacterium halobium), this protein is Dihydroorotase.